We begin with the raw amino-acid sequence, 130 residues long: Small ribosomal subunit protein uS9 (130 aa).

The protein belongs to the universal ribosomal protein uS9 family.

The polypeptide is Small ribosomal subunit protein uS9 (Streptococcus mutans serotype c (strain ATCC 700610 / UA159)).